Here is a 424-residue protein sequence, read N- to C-terminus: Probable methyltransferase EP424R (424 aa).

Positions 104–316 (QIVTNAWLKM…TYIVGKNRLR (213 aa)) constitute an Adrift-type SAM-dependent 2'-O-MTase domain. 2 residues coordinate S-adenosyl-L-methionine: G136 and D229. K269 acts as the Proton acceptor in catalysis.

It is found in the virion. In African swine fever virus (strain Badajoz 1971 Vero-adapted) (Ba71V), this protein is Probable methyltransferase EP424R.